The sequence spans 4367 residues: Dynein heavy chain, cytoplasmic (4367 aa).

Residues 1-13 (MMDSVPSPPPQPS) show a composition bias toward pro residues. The interval 1-20 (MMDSVPSPPPQPSPDANGVA) is disordered. The tract at residues 1-1904 (MMDSVPSPPP…HIKMANAKLN (1904 aa)) is stem. 5 coiled-coil regions span residues 676-693 (ARQI…VEQV), 1176-1215 (IKFA…EAVR), 1327-1351 (LTHF…KEAL), 1557-1574 (YKEF…LNRV), and 1637-1668 (NIPN…KERV). AAA regions lie at residues 1905 to 2130 (YGFE…VLVS), 2202 to 2460 (EAIR…FTVA), 2566 to 2815 (EVNT…WVRG), and 2909 to 3179 (TFCE…QGKI). 1943 to 1950 (GPAGTGKT) is a binding site for ATP. Residues 2195–2218 (ASLEKLQEAIRRLAAERQLVVNDI) are a coiled coil. ATP contacts are provided by residues 2240 to 2247 (GNSGSGKS), 2605 to 2612 (GPPGSGKT), and 2947 to 2954 (GVSGSGKT). Coiled coils occupy residues 3193-3296 (QYVK…LARA), 3423-3481 (PLRE…SRVQ), and 3778-3809 (VIET…VEQI). The stalk stretch occupies residues 3193-3481 (QYVKLYNEKR…AIKAEMSRVQ (289 aa)). AAA stretches follow at residues 3565 to 3794 (LSTA…EISA) and 4003 to 4215 (AERF…VIDT).

Belongs to the dynein heavy chain family. Consists of at least two heavy chains and a number of intermediate and light chains.

It is found in the cytoplasm. It localises to the cytoskeleton. Cytoplasmic dynein acts as a motor for the intracellular retrograde motility of vesicles and organelles along microtubules. Dynein has ATPase activity; the force-producing power stroke is thought to occur on release of ADP. Required to maintain uniform nuclear distribution in hyphae. In Neurospora crassa (strain ATCC 24698 / 74-OR23-1A / CBS 708.71 / DSM 1257 / FGSC 987), this protein is Dynein heavy chain, cytoplasmic (ro-1).